The sequence spans 177 residues: Inorganic pyrophosphatase (177 aa).

Substrate is bound by residues K29, R43, and Y55. Residues D65, D70, and D102 each coordinate Mg(2+). Y141 is a binding site for substrate.

Belongs to the PPase family. As to quaternary structure, homohexamer. It depends on Mg(2+) as a cofactor.

It is found in the cytoplasm. The enzyme catalyses diphosphate + H2O = 2 phosphate + H(+). Its function is as follows. Catalyzes the hydrolysis of inorganic pyrophosphate (PPi) forming two phosphate ions. This is Inorganic pyrophosphatase from Aquifex pyrophilus.